A 324-amino-acid chain; its full sequence is Concanavalin B (324 aa).

Residues 1–25 (MGCERKALILMVVIWIMSFWTLSLA) form the signal peptide. Residues 30 to 311 (TEIAVYWGQR…TNIIRYLNAT (282 aa)) form the GH18 domain. A glycan (N-linked (GlcNAc...) asparagine) is linked at Asn-309.

It belongs to the glycosyl hydrolase 18 family.

Its function is as follows. May act as a carbohydrate-binding protein. The sequence is that of Concanavalin B from Canavalia ensiformis (Jack bean).